Reading from the N-terminus, the 231-residue chain is Small ribosomal subunit protein uS5 (231 aa).

The 64-residue stretch at 61–124 (KFRSKKPYRM…NRAKLNIIKV (64 aa)) folds into the S5 DRBM domain.

Belongs to the universal ribosomal protein uS5 family. As to quaternary structure, part of the 30S ribosomal subunit. Contacts protein S4.

With S4 and S12 plays an important role in translational accuracy. The protein is Small ribosomal subunit protein uS5 of Nanoarchaeum equitans (strain Kin4-M).